A 475-amino-acid polypeptide reads, in one-letter code: Ribulose bisphosphate carboxylase large chain (475 aa).

A propeptide spanning residues 1–2 is cleaved from the precursor; sequence MS. Pro-3 is subject to N-acetylproline. Lys-14 is subject to N6,N6,N6-trimethyllysine. Positions 123 and 173 each coordinate substrate. Lys-175 serves as the catalytic Proton acceptor. Lys-177 is a binding site for substrate. The Mg(2+) site is built by Lys-201, Asp-203, and Glu-204. Lys-201 bears the N6-carboxylysine mark. His-294 acts as the Proton acceptor in catalysis. Residues Arg-295, His-327, and Ser-379 each contribute to the substrate site.

This sequence belongs to the RuBisCO large chain family. Type I subfamily. In terms of assembly, heterohexadecamer of 8 large chains and 8 small chains; disulfide-linked. The disulfide link is formed within the large subunit homodimers. Requires Mg(2+) as cofactor. In terms of processing, the disulfide bond which can form in the large chain dimeric partners within the hexadecamer appears to be associated with oxidative stress and protein turnover.

The protein resides in the plastid. It is found in the chloroplast. The enzyme catalyses 2 (2R)-3-phosphoglycerate + 2 H(+) = D-ribulose 1,5-bisphosphate + CO2 + H2O. The catalysed reaction is D-ribulose 1,5-bisphosphate + O2 = 2-phosphoglycolate + (2R)-3-phosphoglycerate + 2 H(+). RuBisCO catalyzes two reactions: the carboxylation of D-ribulose 1,5-bisphosphate, the primary event in carbon dioxide fixation, as well as the oxidative fragmentation of the pentose substrate in the photorespiration process. Both reactions occur simultaneously and in competition at the same active site. The protein is Ribulose bisphosphate carboxylase large chain of Amborella trichopoda.